The chain runs to 115 residues: U3-lycotoxin-Ls1i (115 aa).

A signal peptide spans 1 to 20 (MKFVLLFGVFLVTLFSYSSA). The propeptide occupies 21-44 (EMLDDFDQADEDELLSLIEKEEAR). Disulfide bonds link Cys48/Cys63, Cys55/Cys72, Cys62/Cys87, and Cys74/Cys85.

This sequence belongs to the neurotoxin 19 (CSTX) family. 01 subfamily. Expressed by the venom gland.

It localises to the secreted. This is U3-lycotoxin-Ls1i from Lycosa singoriensis (Wolf spider).